The chain runs to 157 residues: Protein SINE4 (157 aa).

Positions 104-157 (VTSSSDTTKAKKKTTIRRFVSVTMVLLLSWVLVVLMNHFDHLSMNTQIITLVPT) constitute a KASH domain. A helical transmembrane segment spans residues 122–142 (FVSVTMVLLLSWVLVVLMNHF). Residues 154 to 157 (LVPT) carry the Required for nuclear localization motif.

Interacts with SUN1 and SUN2.

It is found in the nucleus membrane. This is Protein SINE4 from Arabidopsis thaliana (Mouse-ear cress).